A 444-amino-acid chain; its full sequence is UDP-N-acetylmuramate--L-alanine ligase (444 aa).

ATP is bound at residue 111–117 (GAHGKTS).

The protein belongs to the MurCDEF family.

It is found in the cytoplasm. It catalyses the reaction UDP-N-acetyl-alpha-D-muramate + L-alanine + ATP = UDP-N-acetyl-alpha-D-muramoyl-L-alanine + ADP + phosphate + H(+). Its pathway is cell wall biogenesis; peptidoglycan biosynthesis. Its function is as follows. Cell wall formation. The polypeptide is UDP-N-acetylmuramate--L-alanine ligase (Leuconostoc citreum (strain KM20)).